A 430-amino-acid chain; its full sequence is Probable dual-specificity RNA methyltransferase RlmN (430 aa).

The active-site Proton acceptor is glutamate 125. Residues 152 to 395 (RHGRVTLCVS…VTVRDTRGRE (244 aa)) form the Radical SAM core domain. A disulfide bridge connects residues cysteine 159 and cysteine 400. Positions 166, 170, and 173 each coordinate [4Fe-4S] cluster. Residues 221–222 (GE), serine 255, 278–280 (SLH), and asparagine 357 each bind S-adenosyl-L-methionine. Cysteine 400 functions as the S-methylcysteine intermediate in the catalytic mechanism.

Belongs to the radical SAM superfamily. RlmN family. [4Fe-4S] cluster serves as cofactor.

The protein resides in the cytoplasm. The enzyme catalyses adenosine(2503) in 23S rRNA + 2 reduced [2Fe-2S]-[ferredoxin] + 2 S-adenosyl-L-methionine = 2-methyladenosine(2503) in 23S rRNA + 5'-deoxyadenosine + L-methionine + 2 oxidized [2Fe-2S]-[ferredoxin] + S-adenosyl-L-homocysteine. It carries out the reaction adenosine(37) in tRNA + 2 reduced [2Fe-2S]-[ferredoxin] + 2 S-adenosyl-L-methionine = 2-methyladenosine(37) in tRNA + 5'-deoxyadenosine + L-methionine + 2 oxidized [2Fe-2S]-[ferredoxin] + S-adenosyl-L-homocysteine. Its function is as follows. Specifically methylates position 2 of adenine 2503 in 23S rRNA and position 2 of adenine 37 in tRNAs. The sequence is that of Probable dual-specificity RNA methyltransferase RlmN from Acidothermus cellulolyticus (strain ATCC 43068 / DSM 8971 / 11B).